Here is a 566-residue protein sequence, read N- to C-terminus: Phosphatidylinositol 3,4,5-trisphosphate 3-phosphatase TPTE2 (566 aa).

Helical transmembrane passes span 135 to 155 (SFAF…LLLA), 173 to 193 (ISLA…FVEG), 208 to 228 (AIIV…IKFL), and 234 to 254 (WIHL…HLIH). In terms of domain architecture, Phosphatase tensin-type spans 272–448 (RRYTRDGFDL…GYFAQVKHLY (177 aa)). The active-site Phosphocysteine intermediate is C382. A C2 tensin-type domain is found at 455–566 (RRILFIKRFI…ILHSFRLVFT (112 aa)).

It localises to the endoplasmic reticulum membrane. It is found in the golgi apparatus membrane. It carries out the reaction a 1,2-diacyl-sn-glycero-3-phospho-(1D-myo-inositol-3,4,5-trisphosphate) + H2O = a 1,2-diacyl-sn-glycero-3-phospho-(1D-myo-inositol-4,5-bisphosphate) + phosphate. Acts as a lipid phosphatase, removing the phosphate in the D3 position of the inositol ring from phosphatidylinositol 3,4,5-trisphosphate. This Macaca fascicularis (Crab-eating macaque) protein is Phosphatidylinositol 3,4,5-trisphosphate 3-phosphatase TPTE2 (TPTE2).